The following is an 824-amino-acid chain: LPS-assembly protein LptD (824 aa).

Disordered regions lie at residues 1 to 26 and 67 to 117; these read MTEQ…RRVR and TQTP…PAYV. Residues 1-48 form the signal peptide; the sequence is MTEQRRSPHHPATRPPAPPGTSRRVRLPASALRPLVLAMAGLTVSAHA. Positions 98-115 are enriched in low complexity; it reads NTLNLSPSSTPSNPNAPA.

The protein belongs to the LptD family. As to quaternary structure, component of the lipopolysaccharide transport and assembly complex. Interacts with LptE and LptA.

The protein resides in the cell outer membrane. Its function is as follows. Together with LptE, is involved in the assembly of lipopolysaccharide (LPS) at the surface of the outer membrane. The chain is LPS-assembly protein LptD from Cupriavidus metallidurans (strain ATCC 43123 / DSM 2839 / NBRC 102507 / CH34) (Ralstonia metallidurans).